A 734-amino-acid chain; its full sequence is Photosystem I P700 chlorophyll a apoprotein A2 (734 aa).

The next 8 membrane-spanning stretches (helical) occupy residues 46-69, 135-158, 175-199, 273-291, 330-353, 369-395, 417-439, and 517-535; these read IFAS…FHVA, LYFG…LHLQ, LNHH…HVAI, IAHH…GHMY, LHMQ…QHMY, AALY…IFFV, AIIS…LYIH, and FLVH…LILV. [4Fe-4S] cluster is bound by residues C559 and C568. The next 2 helical transmembrane spans lie at 575–596 and 643–665; these read AFYL…YWHW and QAVW…MFLI. Positions 654, 662, and 670 each coordinate chlorophyll a. W671 provides a ligand contact to phylloquinone. Residues 707 to 727 form a helical membrane-spanning segment; the sequence is LVGLAHFTVGFIFTFAPFVIA.

This sequence belongs to the PsaA/PsaB family. In terms of assembly, the PsaA/B heterodimer binds the P700 chlorophyll special pair and subsequent electron acceptors. PSI consists of a core antenna complex that captures photons, and an electron transfer chain that converts photonic excitation into a charge separation. The eukaryotic PSI reaction center is composed of at least 11 subunits. It depends on P700 is a chlorophyll a/chlorophyll a' dimer, A0 is one or more chlorophyll a, A1 is one or both phylloquinones and FX is a shared 4Fe-4S iron-sulfur center. as a cofactor.

The protein resides in the plastid. It localises to the chloroplast thylakoid membrane. It carries out the reaction reduced [plastocyanin] + hnu + oxidized [2Fe-2S]-[ferredoxin] = oxidized [plastocyanin] + reduced [2Fe-2S]-[ferredoxin]. PsaA and PsaB bind P700, the primary electron donor of photosystem I (PSI), as well as the electron acceptors A0, A1 and FX. PSI is a plastocyanin/cytochrome c6-ferredoxin oxidoreductase, converting photonic excitation into a charge separation, which transfers an electron from the donor P700 chlorophyll pair to the spectroscopically characterized acceptors A0, A1, FX, FA and FB in turn. Oxidized P700 is reduced on the lumenal side of the thylakoid membrane by plastocyanin or cytochrome c6. In Emiliania huxleyi (Coccolithophore), this protein is Photosystem I P700 chlorophyll a apoprotein A2.